The sequence spans 538 residues: Cytochrome P450 52-M1 (538 aa).

The helical transmembrane segment at 18–38 (GLLPLLFVAFLVLHEPIWLLW) threads the bilayer. A heme-binding site is contributed by C484.

The protein belongs to the cytochrome P450 family. Heme serves as cofactor.

It is found in the membrane. It catalyses the reaction an omega-methyl-long-chain fatty acid + reduced [NADPH--hemoprotein reductase] + O2 = an omega-hydroxy-long-chain fatty acid + oxidized [NADPH--hemoprotein reductase] + H2O + H(+). It carries out the reaction an (omega-1)-ethyl fatty acid + reduced [NADPH--hemoprotein reductase] + O2 = an (omega-1)-hydroxy-long-chain fatty acid + oxidized [NADPH--hemoprotein reductase] + H2O + H(+). The enzyme catalyses (9Z)-octadecenoate + reduced [NADPH--hemoprotein reductase] + O2 = 18-hydroxy-(9Z)-octadecenoate + oxidized [NADPH--hemoprotein reductase] + H2O + H(+). The catalysed reaction is (9Z)-octadecenoate + reduced [NADPH--hemoprotein reductase] + O2 = 17-hydroxy-(9Z)-octadecenoate + oxidized [NADPH--hemoprotein reductase] + H2O + H(+). It catalyses the reaction (9Z,12Z)-octadecadienoate + reduced [NADPH--hemoprotein reductase] + O2 = 18-hydroxy-(9Z,12Z)-octadecadienoate + oxidized [NADPH--hemoprotein reductase] + H2O + H(+). It carries out the reaction (9Z,12Z)-octadecadienoate + reduced [NADPH--hemoprotein reductase] + O2 = 17-hydroxy-(9Z,12Z)-octadecadienoate + oxidized [NADPH--hemoprotein reductase] + H2O + H(+). The enzyme catalyses hexadecanoate + reduced [NADPH--hemoprotein reductase] + O2 = 16-hydroxyhexadecanoate + oxidized [NADPH--hemoprotein reductase] + H2O + H(+). The catalysed reaction is (9Z)-hexadecenoate + reduced [NADPH--hemoprotein reductase] + O2 = (9Z)-16-hydroxyhexadec-9-enoate + oxidized [NADPH--hemoprotein reductase] + H2O + H(+). It catalyses the reaction octadecanoate + reduced [NADPH--hemoprotein reductase] + O2 = 18-hydroxyoctadecanoate + oxidized [NADPH--hemoprotein reductase] + H2O + H(+). Its function is as follows. Catalyzes the first step of sophorolipid biosynthesis. Catalyzes the terminal (at the omega-position) or subterminal (at the omega(-1)-position) hydroxylation of a fatty acid. This converts the fatty acid to a substrate for the subsequent glycosyltransferase reactions. Oleic acid is the preferred substrate, but it acts on various other C-16, C-18 and C-20 saturated and unsaturated fatty acids, namely palmitic, palmitoleic, stearic, linoleic, cis-9,10-epoxystearic, trans-9,10-epoxystearic and arachidonic acid. This chain is Cytochrome P450 52-M1, found in Starmerella bombicola (Yeast).